The sequence spans 86 residues: Small ribosomal subunit protein uS17 (86 aa).

Belongs to the universal ribosomal protein uS17 family. Part of the 30S ribosomal subunit.

Functionally, one of the primary rRNA binding proteins, it binds specifically to the 5'-end of 16S ribosomal RNA. The sequence is that of Small ribosomal subunit protein uS17 from Bifidobacterium adolescentis (strain ATCC 15703 / DSM 20083 / NCTC 11814 / E194a).